The sequence spans 195 residues: Imidazoleglycerol-phosphate dehydratase (195 aa).

Belongs to the imidazoleglycerol-phosphate dehydratase family.

It is found in the cytoplasm. It carries out the reaction D-erythro-1-(imidazol-4-yl)glycerol 3-phosphate = 3-(imidazol-4-yl)-2-oxopropyl phosphate + H2O. Its pathway is amino-acid biosynthesis; L-histidine biosynthesis; L-histidine from 5-phospho-alpha-D-ribose 1-diphosphate: step 6/9. This chain is Imidazoleglycerol-phosphate dehydratase, found in Pelotomaculum thermopropionicum (strain DSM 13744 / JCM 10971 / SI).